Consider the following 750-residue polypeptide: (13E)-labda-7,13-dien-15-ol synthase (750 aa).

Residues Asp-284, Asp-286, Asp-501, Asp-505, Asn-647, Thr-651, and Glu-655 each contribute to the Mg(2+) site. The DXDD motif signature appears at 284-287 (DIDD). A DDXXD motif motif is present at residues 501 to 505 (DDLAD).

The protein belongs to the terpene synthase family. Mg(2+) is required as a cofactor.

The enzyme catalyses geranylgeranyl diphosphate + H2O = (13E)-labda-7,13-dien-15-ol + diphosphate. It functions in the pathway secondary metabolite biosynthesis; terpenoid biosynthesis. In terms of biological role, bifunctional diterpene synthase that directly generates the endocyclic double bond, as well as the hydroxyl group: produces an endocyclic double bond isomer of copalyl diphosphate (CPP), and carries out subsequent replacement of the diphosphate by a hydroxyl group to form (13E)-labda-7,13-dien-15-ol. The polypeptide is (13E)-labda-7,13-dien-15-ol synthase (Selaginella moellendorffii (Spikemoss)).